We begin with the raw amino-acid sequence, 102 residues long: Large ribosomal subunit protein bL21 (102 aa).

It belongs to the bacterial ribosomal protein bL21 family. In terms of assembly, part of the 50S ribosomal subunit. Contacts protein L20.

Its function is as follows. This protein binds to 23S rRNA in the presence of protein L20. This Listeria innocua serovar 6a (strain ATCC BAA-680 / CLIP 11262) protein is Large ribosomal subunit protein bL21.